The chain runs to 258 residues: MSRRKMIYEGKAKILYEGPEPGTIVQYFKDDATAFNNQKKATLEGKGVLNNRISEHIMLGLGRIGIPTHFLKRLNMREQLVRQVEIIPLEVVCRNVAAGSISTRLGVPEGDQLPRSIVEFYYKKDELGDPMISEEHITAFNWATHQEIDDMMAMTLRVNDFLCGLFTGAGIRLVDFKLEFGRHYEGDMVRTVLADEISPDSCRLWDLETNEKMDKDRFRRDMGNVTEAYAEVARRLGIMKESGQGAANGDVGKGDAAK.

The protein belongs to the SAICAR synthetase family.

It carries out the reaction 5-amino-1-(5-phospho-D-ribosyl)imidazole-4-carboxylate + L-aspartate + ATP = (2S)-2-[5-amino-1-(5-phospho-beta-D-ribosyl)imidazole-4-carboxamido]succinate + ADP + phosphate + 2 H(+). The protein operates within purine metabolism; IMP biosynthesis via de novo pathway; 5-amino-1-(5-phospho-D-ribosyl)imidazole-4-carboxamide from 5-amino-1-(5-phospho-D-ribosyl)imidazole-4-carboxylate: step 1/2. The polypeptide is Phosphoribosylaminoimidazole-succinocarboxamide synthase (Maricaulis maris (strain MCS10) (Caulobacter maris)).